The primary structure comprises 341 residues: Biotin synthase (341 aa).

Residues 40-267 (AEIQVSTLLS…RSMVRLSAGR (228 aa)) enclose the Radical SAM core domain. Positions 55, 59, and 62 each coordinate [4Fe-4S] cluster. Residues Cys-99, Cys-130, Cys-190, and Arg-262 each contribute to the [2Fe-2S] cluster site.

Belongs to the radical SAM superfamily. Biotin synthase family. As to quaternary structure, homodimer. [4Fe-4S] cluster serves as cofactor. Requires [2Fe-2S] cluster as cofactor.

It catalyses the reaction (4R,5S)-dethiobiotin + (sulfur carrier)-SH + 2 reduced [2Fe-2S]-[ferredoxin] + 2 S-adenosyl-L-methionine = (sulfur carrier)-H + biotin + 2 5'-deoxyadenosine + 2 L-methionine + 2 oxidized [2Fe-2S]-[ferredoxin]. It participates in cofactor biosynthesis; biotin biosynthesis; biotin from 7,8-diaminononanoate: step 2/2. Catalyzes the conversion of dethiobiotin (DTB) to biotin by the insertion of a sulfur atom into dethiobiotin via a radical-based mechanism. The polypeptide is Biotin synthase (Xylella fastidiosa (strain M23)).